The primary structure comprises 417 residues: Serine hydroxymethyltransferase (417 aa).

(6S)-5,6,7,8-tetrahydrofolate-binding positions include L121 and 125-127 (GHL). An N6-(pyridoxal phosphate)lysine modification is found at K229. 355-357 (SPF) contributes to the (6S)-5,6,7,8-tetrahydrofolate binding site.

The protein belongs to the SHMT family. As to quaternary structure, homodimer. It depends on pyridoxal 5'-phosphate as a cofactor.

The protein localises to the cytoplasm. The enzyme catalyses (6R)-5,10-methylene-5,6,7,8-tetrahydrofolate + glycine + H2O = (6S)-5,6,7,8-tetrahydrofolate + L-serine. Its pathway is one-carbon metabolism; tetrahydrofolate interconversion. The protein operates within amino-acid biosynthesis; glycine biosynthesis; glycine from L-serine: step 1/1. Its function is as follows. Catalyzes the reversible interconversion of serine and glycine with tetrahydrofolate (THF) serving as the one-carbon carrier. This reaction serves as the major source of one-carbon groups required for the biosynthesis of purines, thymidylate, methionine, and other important biomolecules. Also exhibits THF-independent aldolase activity toward beta-hydroxyamino acids, producing glycine and aldehydes, via a retro-aldol mechanism. This chain is Serine hydroxymethyltransferase, found in Aeromonas salmonicida (strain A449).